Reading from the N-terminus, the 381-residue chain is Probable 26S proteasome regulatory subunit rpn9 (381 aa).

Residues 177–343 (QYYRHCLLYL…QIVTISSVQS (167 aa)) form the PCI domain.

This sequence belongs to the proteasome subunit S11 family.

Acts as a regulatory subunit of the 26S proteasome which is involved in the ATP-dependent degradation of ubiquitinated proteins. This Schizosaccharomyces pombe (strain 972 / ATCC 24843) (Fission yeast) protein is Probable 26S proteasome regulatory subunit rpn9 (rpn9).